Here is a 448-residue protein sequence, read N- to C-terminus: Putative RNA-ligase (448 aa).

Belongs to the asfivirus M448R family.

It is found in the virion. This chain is Putative RNA-ligase, found in African swine fever virus (isolate Pig/Kenya/KEN-50/1950) (ASFV).